Reading from the N-terminus, the 510-residue chain is Membrane-bound transcription factor site-2 protease (510 aa).

Residues 1–3 (MIP) lie on the Cytoplasmic side of the membrane. The chain crosses the membrane as a helical span at residues 4 to 24 (VSLVVVVVGGWTAVYLADLVL). Residues 25-74 (KSSVYFKHSYEDWLEKNGLSISPFHIRWQTSVFNRAFYSWGRRKARMLYQ) are Lumenal-facing. 2 helical membrane-spanning segments follow: residues 75–95 (WFNF…FLLG) and 96–107 (KTLMQTLAQMMA). Residues 108–135 (DSPSSSSSSSSSSSSSSSSSIHNEQVLQ) are Lumenal-facing. A helical membrane pass occupies residues 136–160 (VVVPGINLPVNQLTYFFAAVLISGV). Histidine 162 is a binding site for Zn(2+). Glutamate 163 is an active-site residue. Transmembrane regions (helical) follow at residues 165–177 (GHGI…QVRF), 178–200 (NGFG…TTHL), and 220–242 (FVLA…PFYY). Histidine 166 serves as a coordination point for Zn(2+). The Lumenal portion of the chain corresponds to 243–437 (TGVGVLITEV…LPVIVETFVK (195 aa)). N-linked (GlcNAc...) asparagine glycosylation is present at asparagine 328. The next 2 membrane-spanning stretches (helical) occupy residues 438-455 (YLIS…VPCF) and 456-467 (ALDGQWILNSFL). Topologically, residues 468-483 (DATLTSVIGDNDVKDL) are lumenal. Residues 484 to 504 (IGFFILLGGSVLLAANVTLGL) form a helical membrane-spanning segment. The Cytoplasmic portion of the chain corresponds to 505–510 (WMVTAR).

Belongs to the peptidase M50A family. Requires Zn(2+) as cofactor.

Its subcellular location is the membrane. The protein resides in the cytoplasm. It is found in the golgi apparatus membrane. It catalyses the reaction Cleaves several transcription factors that are type-2 transmembrane proteins within membrane-spanning domains. Known substrates include sterol regulatory element-binding protein (SREBP) -1, SREBP-2 and forms of the transcriptional activator ATF6. SREBP-2 is cleaved at the site 477-DRSRILL-|-CVLTFLCLSFNPLTSLLQWGGA-505. The residues Asn-Pro, 11 residues distal to the site of cleavage in the membrane-spanning domain, are important for cleavage by S2P endopeptidase. Replacement of either of these residues does not prevent cleavage, but there is no cleavage if both of these residues are replaced.. Its function is as follows. Zinc metalloprotease that mediates intramembrane proteolysis of proteins such as ATF6, ATF6B, SREBF1/SREBP1 and SREBF2/SREBP2. Catalyzes the second step in the proteolytic activation of the sterol regulatory element-binding proteins (SREBPs) SREBF1/SREBP1 and SREBF2/SREBP2: cleaves SREBPs within the first transmembrane segment, thereby releasing the N-terminal segment with a portion of the transmembrane segment attached. Mature N-terminal SREBP fragments shuttle to the nucleus and activate gene transcription. Also mediates the second step in the proteolytic activation of the cyclic AMP-dependent transcription factor ATF-6 (ATF6 and ATF6B). Involved in intramembrane proteolysis during bone formation. In astrocytes and osteoblasts, upon DNA damage and ER stress, mediates the second step of the regulated intramembrane proteolytic activation of the transcription factor CREB3L1, leading to the inhibition of cell-cycle progression. In Cricetulus griseus (Chinese hamster), this protein is Membrane-bound transcription factor site-2 protease (MBTPS2).